Consider the following 208-residue polypeptide: V-type ATP synthase subunit D (208 aa).

The protein belongs to the V-ATPase D subunit family.

In terms of biological role, produces ATP from ADP in the presence of a proton gradient across the membrane. This is V-type ATP synthase subunit D from Streptococcus pyogenes serotype M1.